A 199-amino-acid chain; its full sequence is Recombination protein RecR (199 aa).

Residues 58 to 73 form a C4-type zinc finger; it reads CKICFNITDKEVCDIC. The region spanning 81–176 is the Toprim domain; the sequence is STICVVSHPM…KVTRIAHGIP (96 aa).

The protein belongs to the RecR family.

Its function is as follows. May play a role in DNA repair. It seems to be involved in an RecBC-independent recombinational process of DNA repair. It may act with RecF and RecO. The protein is Recombination protein RecR of Caldanaerobacter subterraneus subsp. tengcongensis (strain DSM 15242 / JCM 11007 / NBRC 100824 / MB4) (Thermoanaerobacter tengcongensis).